The chain runs to 74 residues: uncharacterized protein (74 aa).

The chain crosses the membrane as a helical span at residues 54 to 72; it reads LIIPRFLLLIYSVIQCLFL.

Its subcellular location is the membrane. This is an uncharacterized protein from Saccharomyces cerevisiae (strain ATCC 204508 / S288c) (Baker's yeast).